A 213-amino-acid chain; its full sequence is Leucyl/phenylalanyl-tRNA--protein transferase (213 aa).

It belongs to the L/F-transferase family.

The protein localises to the cytoplasm. The catalysed reaction is N-terminal L-lysyl-[protein] + L-leucyl-tRNA(Leu) = N-terminal L-leucyl-L-lysyl-[protein] + tRNA(Leu) + H(+). It carries out the reaction N-terminal L-arginyl-[protein] + L-leucyl-tRNA(Leu) = N-terminal L-leucyl-L-arginyl-[protein] + tRNA(Leu) + H(+). It catalyses the reaction L-phenylalanyl-tRNA(Phe) + an N-terminal L-alpha-aminoacyl-[protein] = an N-terminal L-phenylalanyl-L-alpha-aminoacyl-[protein] + tRNA(Phe). Its function is as follows. Functions in the N-end rule pathway of protein degradation where it conjugates Leu, Phe and, less efficiently, Met from aminoacyl-tRNAs to the N-termini of proteins containing an N-terminal arginine or lysine. The protein is Leucyl/phenylalanyl-tRNA--protein transferase of Rhodospirillum rubrum (strain ATCC 11170 / ATH 1.1.1 / DSM 467 / LMG 4362 / NCIMB 8255 / S1).